Reading from the N-terminus, the 275-residue chain is Small ribosomal subunit protein uS3 (275 aa).

Residues 39–107 (VRIYLKKKLK…PVHVNIEEIR (69 aa)) form the KH type-2 domain. The disordered stretch occupies residues 216–275 (AAATSAEPAAEEKKTRRAPSKTAARKPAAGTDKPLVAAKPAVKRVRKVETPAADTQKSGE).

The protein belongs to the universal ribosomal protein uS3 family. Part of the 30S ribosomal subunit. Forms a tight complex with proteins S10 and S14.

In terms of biological role, binds the lower part of the 30S subunit head. Binds mRNA in the 70S ribosome, positioning it for translation. The polypeptide is Small ribosomal subunit protein uS3 (Polynucleobacter asymbioticus (strain DSM 18221 / CIP 109841 / QLW-P1DMWA-1) (Polynucleobacter necessarius subsp. asymbioticus)).